The primary structure comprises 343 residues: MNRIKVAILFGGCSEEHDVSVKSAIEIAANINKEKYEPLYIGITKSGVWKMCEKPCAEWENDNCYSAVLSPDKKMHGLLVKKNHEYEINHVDVAFSALHGKSGEDGSIQGLFELSGIPFVGCDIQSSAICMDKSLTYIVAKNAGIATPAFWVINKDDRPVAATFTYPVFVKPARSGSSFGVKKVNSADELDYAIESARQYDSKILIEQAVSGCEVGCAVLGNSAALVVGEVDQIRLQYGIFRIHQEVEPEKGSENAVITVPADLSAEERGRIQETAKKIYKALGCRGLARVDMFLQDNGRIVLNEVNTLPGFTSYSRYPRMMAAAGIALPELIDRLIVLALKG.

ATP is bound by residues K133, 169 to 171 (FVK), 177 to 178 (SS), 207 to 214 (EQAVSGCE), and F241. Residues 137-338 (YIVAKNAGIA…LPELIDRLIV (202 aa)) enclose the ATP-grasp domain. H244 lines the substrate pocket. 304–305 (NE) is a binding site for ATP. Residues E305 and N307 each contribute to the Mg(2+) site.

The protein belongs to the D-alanine--D-alanine ligase family. Requires Mg(2+) as cofactor. It depends on Mn(2+) as a cofactor.

Its subcellular location is the cell membrane. The enzyme catalyses (R)-lactate + D-alanine + ATP = D-alanyl-(R)-lactate + ADP + phosphate. Its function is as follows. Required for high-level resistance to glycopeptide antibiotics. D-Ala--D-Ala ligase of altered specificity which catalyzes ester bond formation between D-Ala and various D-hydroxy acids; produces a peptidoglycan which does not terminate in D-alanine but in D-lactate, thus preventing vancomycin or teicoplanin binding. The protein is Vancomycin/teicoplanin A-type resistance protein VanA (vanA) of Enterococcus faecium (Streptococcus faecium).